A 353-amino-acid chain; its full sequence is Chemerin-like receptor 2 (353 aa).

Topologically, residues M1–S41 are extracellular. N14 carries N-linked (GlcNAc...) asparagine glycosylation. Residues L42 to L62 form a helical membrane-spanning segment. Topologically, residues M63–T73 are cytoplasmic. The helical transmembrane segment at L74 to I94 threads the bilayer. The Extracellular portion of the chain corresponds to S95 to V112. C110 and C187 are disulfide-bonded. A helical transmembrane segment spans residues N113–L133. Residues D134–S154 lie on the Cytoplasmic side of the membrane. A helical transmembrane segment spans residues L155 to F175. The Extracellular portion of the chain corresponds to R176 to L210. A helical membrane pass occupies residues F211 to M231. Topologically, residues K232–L247 are cytoplasmic. Residues S248–L268 form a helical membrane-spanning segment. The Extracellular segment spans residues S269 to L286. Residues S287–K307 traverse the membrane as a helical segment. Over T308 to Q353 the chain is Cytoplasmic.

This sequence belongs to the chemokine-like receptor (CMKLR) family. As to expression, high expressed in white adipose tissue and skeletal muscle. Expressed in hippocampus and cortex.

Its subcellular location is the cell membrane. Its function is as follows. Receptor for chemoattractant adipokine chemerin/RARRES2 suggesting a role for this receptor in the regulation of inflammation and energy homesotasis. Signals mainly via beta-arrestin pathway. Binding of RARRES2 activates weakly G proteins, calcium mobilization and MAPK1/MAPK3 (ERK1/2) phosphorylation too. Acts also as a receptor for TAFA1, mediates its effects on neuronal stem-cell proliferation and differentiation via the activation of ROCK/ERK and ROCK/STAT3 signaling pathway. In Mus musculus (Mouse), this protein is Chemerin-like receptor 2 (Cmklr2).